A 268-amino-acid polypeptide reads, in one-letter code: Protein MSS18 (268 aa).

This sequence to baculovirus occlusion-derived virus envelope protein E27 (ODV-E27).

It localises to the mitochondrion. Its function is as follows. Involved in splicing of intron aI5-beta of the mitochondrial COX1 transcript. In Saccharomyces cerevisiae (strain ATCC 204508 / S288c) (Baker's yeast), this protein is Protein MSS18 (MSS18).